The primary structure comprises 802 residues: Putative flavin carrier protein 3 (802 aa).

An N-terminal signal peptide occupies residues 1 to 28 (MRFLQVYKSSALIGLIILLASKVNLAEA). Residues 29-169 (KRKLVATSLV…YFSNGKTVSQ (141 aa)) are Lumenal-facing. A glycan (N-linked (GlcNAc...) asparagine) is linked at Asn-149. A helical membrane pass occupies residues 170–190 (IGVKWATAVVAGIGLLLSAIL). At 191 to 200 (STFGNSTAAS) the chain is on the cytoplasmic side. A helical membrane pass occupies residues 201–221 (HISANTMSLFLYFQSVVVVAM). The Lumenal segment spans residues 222-229 (QHVHRVPP). A helical membrane pass occupies residues 230–250 (IAAAWAENLVWSMGLIRISFM). The Cytoplasmic portion of the chain corresponds to 251–255 (QRIFR). A helical membrane pass occupies residues 256-278 (WYVQSTGGTPSLYLTSTSMSVLA). Over 279–323 (QRSWQYLMELPLIKRATNVLYGNANTLIFRGIKRLGYKMGIENTS) the chain is Lumenal. Asn-321 is a glycosylation site (N-linked (GlcNAc...) asparagine). The helical transmembrane segment at 324–344 (IVCTGFTFFVLCGYVLAGFII) threads the bilayer. Over 345 to 377 (VFKCCVELATRLGWIQKARFWEFRKQWRMILKG) the chain is Cytoplasmic. A helical membrane pass occupies residues 378 to 398 (ALLRYIYIGFVQLTILSFWEF). At 399 to 405 (TERDSPA) the chain is on the lumenal side. Residues 406–426 (VIVIACLFILLSCGLMLWAAW) traverse the membrane as a helical segment. The Cytoplasmic portion of the chain corresponds to 427 to 467 (RTVFFARRSVALYNNPAALLYGDEYVLHKYGFFYTMFNANH). A helical membrane pass occupies residues 468–488 (YWWNIVLLSYIFVKSLLVGFA). Topologically, residues 489 to 495 (QASGQTQ) are lumenal. The helical transmembrane segment at 496–516 (VLFMFILDLFYFVAIIYYKPY) threads the bilayer. Residues 517–525 (LDRPTNIMN) are Cytoplasmic-facing. A helical membrane pass occupies residues 526 to 546 (ILIATVTVVNSFLFMFFSDLF). N-linked (GlcNAc...) asparagine glycosylation is present at Asn-547. Over 547 to 557 (NQSYKVAAIMG) the chain is Lumenal. Residues 558–578 (WIFFIMNAAFSFILLMMILAF) traverse the membrane as a helical segment. The Cytoplasmic segment spans residues 579–802 (AGMMLFSKNP…PPGFFDEGFM (224 aa)). Phosphoserine occurs at positions 616 and 635. Residues 629 to 802 (KDHDDNSDYE…PPGFFDEGFM (174 aa)) are disordered. Polar residues-rich tracts occupy residues 653-663 (DETTPTTVTSS), 697-717 (KQQTFPHNLTNLSRENLSTLG), and 761-788 (DTSSSDGGFRSQNYVRDDSINSLGNNKQ). 2 positions are modified to phosphoserine: Ser-779 and Ser-782.

Belongs to the transient receptor potential (TRP) ion channel family.

Its subcellular location is the endoplasmic reticulum membrane. May be responsible for the transport of FAD into the endoplasmic reticulum lumen, where it is required for oxidative protein folding. The chain is Putative flavin carrier protein 3 (FLC3) from Saccharomyces cerevisiae (strain ATCC 204508 / S288c) (Baker's yeast).